The primary structure comprises 585 residues: A-type ATP synthase subunit A (585 aa).

231 to 238 (GPFGSGKT) contacts ATP.

This sequence belongs to the ATPase alpha/beta chains family. Has multiple subunits with at least A(3), B(3), C, D, E, F, H, I and proteolipid K(x).

Its subcellular location is the cell membrane. It catalyses the reaction ATP + H2O + 4 H(+)(in) = ADP + phosphate + 5 H(+)(out). Its function is as follows. Produces ATP from ADP in the presence of a proton gradient across the membrane. The archaeal alpha chain is a catalytic subunit. In terms of biological role, component of the A-type ATP synthase that produces ATP from ADP in the presence of a proton gradient across the membrane. The A chain is the catalytic subunit. The sequence is that of A-type ATP synthase subunit A from Thermococcus kodakarensis (strain ATCC BAA-918 / JCM 12380 / KOD1) (Pyrococcus kodakaraensis (strain KOD1)).